An 84-amino-acid chain; its full sequence is Small ribosomal subunit protein bS18 (84 aa).

Belongs to the bacterial ribosomal protein bS18 family. In terms of assembly, part of the 30S ribosomal subunit. Forms a tight heterodimer with protein bS6.

In terms of biological role, binds as a heterodimer with protein bS6 to the central domain of the 16S rRNA, where it helps stabilize the platform of the 30S subunit. This chain is Small ribosomal subunit protein bS18, found in Mycobacterium sp. (strain JLS).